We begin with the raw amino-acid sequence, 284 residues long: tRNA uridine(34) hydroxylase (284 aa).

In terms of domain architecture, Rhodanese spans 132 to 226 (AGRPVVMLDT…YFEEVGGAHY (95 aa)). The active-site Cysteine persulfide intermediate is the cysteine 186.

It belongs to the TrhO family.

The enzyme catalyses uridine(34) in tRNA + AH2 + O2 = 5-hydroxyuridine(34) in tRNA + A + H2O. Functionally, catalyzes oxygen-dependent 5-hydroxyuridine (ho5U) modification at position 34 in tRNAs. The chain is tRNA uridine(34) hydroxylase from Burkholderia orbicola (strain MC0-3).